Reading from the N-terminus, the 370-residue chain is 3-isopropylmalate dehydrogenase (370 aa).

Positions 99, 109, 137, and 227 each coordinate substrate. Mg(2+)-binding residues include aspartate 227, aspartate 251, and aspartate 255. Residue 290-302 participates in NAD(+) binding; it reads GSAPDIAGQDKAN.

The protein belongs to the isocitrate and isopropylmalate dehydrogenases family. LeuB type 1 subfamily. Homodimer. Requires Mg(2+) as cofactor. Mn(2+) is required as a cofactor.

Its subcellular location is the cytoplasm. The enzyme catalyses (2R,3S)-3-isopropylmalate + NAD(+) = 4-methyl-2-oxopentanoate + CO2 + NADH. It participates in amino-acid biosynthesis; L-leucine biosynthesis; L-leucine from 3-methyl-2-oxobutanoate: step 3/4. Its function is as follows. Catalyzes the oxidation of 3-carboxy-2-hydroxy-4-methylpentanoate (3-isopropylmalate) to 3-carboxy-4-methyl-2-oxopentanoate. The product decarboxylates to 4-methyl-2 oxopentanoate. In Rhodospirillum rubrum (strain ATCC 11170 / ATH 1.1.1 / DSM 467 / LMG 4362 / NCIMB 8255 / S1), this protein is 3-isopropylmalate dehydrogenase.